The sequence spans 240 residues: EF-hand domain-containing protein D2 (240 aa).

At Ala2 the chain carries N-acetylalanine. Phosphoserine is present on Ser11. The tract at residues 13 to 38 is disordered; it reads RLQMEGEGGGETPEQPGLNGAAAAAA. 2 positions are modified to phosphoserine: Ser74 and Ser76. At Tyr83 the chain carries Phosphotyrosine. EF-hand domains lie at 92 to 127 and 128 to 163; these read KQIK…LGAP and QTHL…AAAG. The Ca(2+) site is built by Asp105, Asp109, Glu116, Asp141, Asp143, Asp145, Lys147, and Glu152. An N6-acetyllysine modification is found at Lys233.

As to quaternary structure, interacts with CASP9; with inactive form. Found in lymphocytes; preferentially expressed in CD8+ cells.

Its subcellular location is the membrane raft. Functionally, may regulate B-cell receptor (BCR)-induced immature and primary B-cell apoptosis. Plays a role as negative regulator of the canonical NF-kappa-B-activating branch. Controls spontaneous apoptosis through the regulation of BCL2L1 abundance. This chain is EF-hand domain-containing protein D2 (EFHD2), found in Homo sapiens (Human).